Reading from the N-terminus, the 307-residue chain is Protoheme IX farnesyltransferase (307 aa).

Helical transmembrane passes span 28–48 (VTQL…PGMV), 50–70 (WPVL…AFAI), 100–120 (ILLF…VFAN), 122–142 (LTMW…TLLL), 149–169 (NIVI…AAVA), 176–196 (AWIL…ALAL), 218–238 (FTLL…ILPF), 243–263 (SGYL…VHAW), and 282–302 (IVYL…KFGP).

This sequence belongs to the UbiA prenyltransferase family. Protoheme IX farnesyltransferase subfamily.

Its subcellular location is the cell inner membrane. It catalyses the reaction heme b + (2E,6E)-farnesyl diphosphate + H2O = Fe(II)-heme o + diphosphate. The protein operates within porphyrin-containing compound metabolism; heme O biosynthesis; heme O from protoheme: step 1/1. Functionally, converts heme B (protoheme IX) to heme O by substitution of the vinyl group on carbon 2 of heme B porphyrin ring with a hydroxyethyl farnesyl side group. The sequence is that of Protoheme IX farnesyltransferase from Ralstonia nicotianae (strain ATCC BAA-1114 / GMI1000) (Ralstonia solanacearum).